We begin with the raw amino-acid sequence, 65 residues long: Light-harvesting protein B-800-850 alpha chain C (65 aa).

The Cytoplasmic portion of the chain corresponds to 1-11 (MNQGRIWTVVS). The chain crosses the membrane as a helical span at residues 12–35 (PTVGLPLLLGSVAAIAFAVHFAVL). Histidine 31 is an a bacteriochlorophyll binding site. Over 36-65 (ENTSWVAAFMNGKSVAAAPAPAAPAAPAKK) the chain is Periplasmic.

This sequence belongs to the antenna complex alpha subunit family. In terms of assembly, the core complex is formed by different alpha and beta chains, binding bacteriochlorophyll molecules, and arranged most probably in tetrameric structures disposed around the reaction center. The non-pigmented gamma chains may constitute additional components.

The protein resides in the cell inner membrane. Its function is as follows. Antenna complexes are light-harvesting systems, which transfer the excitation energy to the reaction centers. The polypeptide is Light-harvesting protein B-800-850 alpha chain C (pucAC) (Rhodopseudomonas palustris).